Here is a 108-residue protein sequence, read N- to C-terminus: Translation initiation factor 1A (108 aa).

Residues 11 to 85 (PSRDVPKPEE…NRCDILYKYG (75 aa)) form the S1-like domain.

It belongs to the eIF-1A family.

In terms of biological role, seems to be required for maximal rate of protein biosynthesis. Enhances ribosome dissociation into subunits and stabilizes the binding of the initiator Met-tRNA(I) to 40 S ribosomal subunits. This Saccharolobus islandicus (strain Y.N.15.51 / Yellowstone #2) (Sulfolobus islandicus) protein is Translation initiation factor 1A (eIF1A).